A 155-amino-acid polypeptide reads, in one-letter code: Ribosomal RNA large subunit methyltransferase H (155 aa).

S-adenosyl-L-methionine is bound by residues Leu72, Gly103, and 122–127 (LSALTL).

Belongs to the RNA methyltransferase RlmH family. Homodimer.

It localises to the cytoplasm. It catalyses the reaction pseudouridine(1915) in 23S rRNA + S-adenosyl-L-methionine = N(3)-methylpseudouridine(1915) in 23S rRNA + S-adenosyl-L-homocysteine + H(+). In terms of biological role, specifically methylates the pseudouridine at position 1915 (m3Psi1915) in 23S rRNA. The protein is Ribosomal RNA large subunit methyltransferase H of Cronobacter sakazakii (strain ATCC BAA-894) (Enterobacter sakazakii).